The primary structure comprises 1787 residues: Chitin synthase 5 (1787 aa).

The tract at residues 1-26 (MASRRMSMYSVTSEGMGGPRGAGQQS) is disordered. The N-linked (GlcNAc...) asparagine glycan is linked to Asn164. The interval 345–367 (RIRDGDESSDGGRGARTPNSAED) is disordered. N-linked (GlcNAc...) asparagine glycans are attached at residues Asn643, Asn657, Asn668, and Asn695. 2 helical membrane passes run 747-767 (MWVALVWAITFWIPSPLLRYV) and 783-803 (FVLCFIIFLLNAAIVFWIIFL). Asn894 and Asn1018 each carry an N-linked (GlcNAc...) asparagine glycan. Residues 1055-1075 (FLLAFAIIMCAVILLKFVSAL) traverse the membrane as a helical segment. Asn1420 is a glycosylation site (N-linked (GlcNAc...) asparagine). 3 helical membrane passes run 1445–1465 (FVVFVDLFGTIILPATCVYLG), 1478–1498 (FPLITLIMLAAVYGLQALIFI), and 1506–1526 (IGWMIIYLLAFPIYSFILPIY). A glycan (N-linked (GlcNAc...) asparagine) is linked at Asn1533. The tract at residues 1628 to 1657 (SPNSPAPYQHMSRSPTAYAGPTPYSDNPAA) is disordered. A DEK-C domain is found at 1729 to 1785 (GPDDFQIVDAIRAVLMEVDLDTVTKKQVRALVEQRLQTELVGERRTFLDRQIDNELA).

The protein belongs to the chitin synthase family. Class V subfamily.

The protein localises to the cell membrane. It carries out the reaction [(1-&gt;4)-N-acetyl-beta-D-glucosaminyl](n) + UDP-N-acetyl-alpha-D-glucosamine = [(1-&gt;4)-N-acetyl-beta-D-glucosaminyl](n+1) + UDP + H(+). Polymerizes chitin, a structural polymer of the cell wall and septum, by transferring the sugar moiety of UDP-GlcNAc to the non-reducing end of the growing chitin polymer. May play a minor overlapping role with CHS6 in growth and differentiation. The sequence is that of Chitin synthase 5 from Pyricularia oryzae (strain 70-15 / ATCC MYA-4617 / FGSC 8958) (Rice blast fungus).